The sequence spans 121 residues: Acidic phospholipase A2 SpII RP4 (121 aa).

Disulfide bonds link Cys25-Cys114, Cys27-Cys43, Cys42-Cys94, Cys48-Cys121, Cys49-Cys87, Cys56-Cys80, and Cys74-Cys85. Tyr26, Gly28, and Gly30 together coordinate Ca(2+). His46 is a catalytic residue. Asp47 serves as a coordination point for Ca(2+). Asp88 is a catalytic residue.

Ca(2+) is required as a cofactor. Expressed by the venom gland.

It is found in the secreted. The catalysed reaction is a 1,2-diacyl-sn-glycero-3-phosphocholine + H2O = a 1-acyl-sn-glycero-3-phosphocholine + a fatty acid + H(+). In terms of biological role, snake venom phospholipase A2 (PLA2) which exhibits indirect hemolysis, induces mild edema inflammation in the foot pads of mice and slightly delays anticoagulant activities. In mice, not lethal, even at the highest dose, and exhibits low to moderate myotoxicity on muscular fibers. PLA2 catalyzes the calcium-dependent hydrolysis of the 2-acyl groups in 3-sn-phosphoglycerides. This Bothrops alternatus (Urutu) protein is Acidic phospholipase A2 SpII RP4.